The following is a 111-amino-acid chain: Iron-sulfur cluster insertion protein ErpA (111 aa).

Positions 39, 103, and 105 each coordinate iron-sulfur cluster.

Belongs to the HesB/IscA family. Homodimer. Iron-sulfur cluster is required as a cofactor.

In terms of biological role, required for insertion of 4Fe-4S clusters for at least IspG. The polypeptide is Iron-sulfur cluster insertion protein ErpA (Acinetobacter baumannii (strain AB307-0294)).